We begin with the raw amino-acid sequence, 625 residues long: ATP-dependent RNA helicase mrh4, mitochondrial (625 aa).

The N-terminal 16 residues, 1 to 16, are a transit peptide targeting the mitochondrion; that stretch reads MWKTARDSVCLICRSA. Positions 19 to 28 are enriched in low complexity; sequence TTTSTSARAS. Positions 19–119 are disordered; the sequence is TTTSTSARAS…DKNTKGQKAL (101 aa). A compositionally biased stretch (basic and acidic residues) spans 90–113; sequence DPRKAPKPKPVEEDSRRDKRDKNT. A Q motif motif is present at residues 144 to 177; the sequence is QAFDQFDLLPVVKEAIAQEALKGMTEIKPTPVQR. The 212-residue stretch at 195-406 folds into the Helicase ATP-binding domain; it reads PKSDNGREEF…EEQFPYINRI (212 aa). Residue 208–215 participates in ATP binding; the sequence is AETGSGKT. The short motif at 353 to 356 is the DEAD box element; that stretch reads DEAD. The region spanning 453–625 is the Helicase C-terminal domain; it reads EGPKSEIDVK…ESMFMGQALV (173 aa).

Belongs to the DEAD box helicase family. MRH4 subfamily.

The protein localises to the mitochondrion. The enzyme catalyses ATP + H2O = ADP + phosphate + H(+). Functionally, ATP-binding RNA helicase involved in mitochondrial RNA metabolism. Required for maintenance of mitochondrial DNA. The sequence is that of ATP-dependent RNA helicase mrh4, mitochondrial (drh-15) from Neurospora crassa (strain ATCC 24698 / 74-OR23-1A / CBS 708.71 / DSM 1257 / FGSC 987).